Consider the following 108-residue polypeptide: MVKGSQVKPSTTELLLKAVSAKAPSGDPIHQKIGDLPFEKIVEIAIEKKPDLLAKTLKAAVKTILGSARSIGVTVDGKDPKEVTRQVDEGVYDAVLAKYEEKWEEAEG.

Belongs to the universal ribosomal protein uL11 family. In terms of assembly, part of the ribosomal stalk of the 50S ribosomal subunit. Interacts with L10 and the large rRNA to form the base of the stalk. L10 forms an elongated spine to which L12 dimers bind in a sequential fashion forming a multimeric L10(L12)X complex.

In terms of biological role, forms part of the ribosomal stalk which helps the ribosome interact with GTP-bound translation factors. This chain is Large ribosomal subunit protein uL11 (rpl11), found in Aeropyrum pernix (strain ATCC 700893 / DSM 11879 / JCM 9820 / NBRC 100138 / K1).